The chain runs to 580 residues: Methyl-CpG-binding domain protein 4 (580 aa).

The tract at residues 1 to 36 (MGTTGLESLSLGDRGAAPTVTSSERLVPDPPNDLRK) is disordered. Residues 76–148 (ATAGTECRKS…EDFDFTVLSK (73 aa)) enclose the MBD domain. A phosphoserine mark is found at Ser-318 and Ser-428. Asp-560 is a catalytic residue.

As to quaternary structure, interacts with MLH1.

The protein resides in the nucleus. Functionally, mismatch-specific DNA N-glycosylase involved in DNA repair. Has thymine glycosylase activity and is specific for G:T mismatches within methylated and unmethylated CpG sites. Can also remove uracil or 5-fluorouracil in G:U mismatches. Has no lyase activity. Was first identified as methyl-CpG-binding protein. In Homo sapiens (Human), this protein is Methyl-CpG-binding domain protein 4.